The following is a 945-amino-acid chain: Microtubule cross-linking factor 3 (945 aa).

Low complexity-rich tracts occupy residues 1–23, 72–93, and 110–126; these read MSQP…AAAT, QQQL…TSGT, and PKGA…GAEG. The signal sequence occupies residues 1–25; the sequence is MSQPPSGGAAPAATSASAAAAATEA. 4 disordered regions span residues 1–250, 265–293, 307–366, and 494–522; these read MSQP…SYWK, KERA…PVAG, SPMA…TLKN, and LSLK…DNED. Basic and acidic residues predominate over residues 141–151; sequence GQPEEAPREIE. Gly residues predominate over residues 164-179; it reads GGVGGGGEGGGAGGGP. Residues 219–235 are compositionally biased toward low complexity; it reads TAATSKTPGPGSRNSGS. The segment covering 236–247 has biased composition (gly residues); that stretch reads GSTGSGSGGGGS. Low complexity predominate over residues 328–345; sequence AMQAAAPPSSQPHSQQLQ. Positions 340-724 form a coiled coil; it reads HSQQLQEQED…GKVMQLQYEN (385 aa). 2 stretches are compositionally biased toward basic and acidic residues: residues 353–366 and 494–511; these read EMEK…TLKN and LSLK…EKKA. Serine 567 bears the Phosphoserine mark. The disordered stretch occupies residues 741-811; the sequence is GIRGSPRDSD…PWPKSFSDRQ (71 aa). The segment covering 745–766 has biased composition (basic and acidic residues); sequence SPRDSDAESDAGKKESDDDSRP. Position 779 is a phosphoserine (serine 779). Positions 809–833 form a coiled coil; sequence DRQQMKDIRSEAERLGKTIDRLIAD. A helical transmembrane segment spans residues 913–933; sequence PIILLILILVLFSSLSYTTIF.

The protein belongs to the MTCL family.

The protein localises to the membrane. The polypeptide is Microtubule cross-linking factor 3 (Mtcl3) (Mus musculus (Mouse)).